The primary structure comprises 88 residues: Cell division topological specificity factor (88 aa).

The protein belongs to the MinE family.

Functionally, prevents the cell division inhibition by proteins MinC and MinD at internal division sites while permitting inhibition at polar sites. This ensures cell division at the proper site by restricting the formation of a division septum at the midpoint of the long axis of the cell. This Clostridium kluyveri (strain ATCC 8527 / DSM 555 / NBRC 12016 / NCIMB 10680 / K1) protein is Cell division topological specificity factor.